The following is an 89-amino-acid chain: RNA-binding protein Hfq (89 aa).

The 60-residue stretch at 9–68 folds into the Sm domain; sequence EPFLNALRKEKVPVSIYLVNGIKLQGQIESFDQFVILLRNNVNQMVYKHAISTVVPARNV. The disordered stretch occupies residues 70 to 89; sequence TAPPVPTETHAQSSEEFGNI. Positions 78–89 are enriched in polar residues; it reads THAQSSEEFGNI.

Belongs to the Hfq family. In terms of assembly, homohexamer.

In terms of biological role, RNA chaperone that binds small regulatory RNA (sRNAs) and mRNAs to facilitate mRNA translational regulation in response to envelope stress, environmental stress and changes in metabolite concentrations. Also binds with high specificity to tRNAs. The chain is RNA-binding protein Hfq from Alkalilimnicola ehrlichii (strain ATCC BAA-1101 / DSM 17681 / MLHE-1).